The following is a 262-amino-acid chain: Enoyl-[acyl-carrier-protein] reductase [NADH] FabI (262 aa).

NAD(+)-binding positions include Gly-13, 19–20 (SI), Gln-40, 64–65 (DV), and Ile-92. Ala-95 is a binding site for substrate. Active-site proton acceptor residues include Tyr-146 and Tyr-156. NAD(+)-binding positions include Lys-163 and 192-196 (IRTLA).

Belongs to the short-chain dehydrogenases/reductases (SDR) family. FabI subfamily. In terms of assembly, homotetramer.

It carries out the reaction a 2,3-saturated acyl-[ACP] + NAD(+) = a (2E)-enoyl-[ACP] + NADH + H(+). The catalysed reaction is (2E)-butenoyl-[ACP] + NADH + H(+) = butanoyl-[ACP] + NAD(+). The enzyme catalyses (2E)-decenoyl-[ACP] + NADH + H(+) = decanoyl-[ACP] + NAD(+). It catalyses the reaction (2E)-hexadecenoyl-[ACP] + NADH + H(+) = hexadecanoyl-[ACP] + NAD(+). It carries out the reaction (2E,9Z)-hexadecadienoyl-[ACP] + NADH + H(+) = (9Z)-hexadecenoyl-[ACP] + NAD(+). The catalysed reaction is (2E)-5-methylhexenoyl-[ACP] + NADH + H(+) = 5-methylhexanoyl-[ACP] + NAD(+). Its pathway is lipid metabolism; fatty acid biosynthesis. The protein operates within cofactor biosynthesis; biotin biosynthesis. Inhibited by diazaborines, triclosan (5-chloro-2-2,4-dichlorophenoxyphenol), 1,4-disubstituted imidazoles, 1,4-benzodiazepine derivatives, naphthyridinone derivatives, luteolin and curcumin. The antibiotic diazaborine interferes with the activity by binding to the protein and NAD. Catalyzes the reduction of a carbon-carbon double bond in an enoyl moiety that is covalently linked to an acyl carrier protein (ACP). Involved in the elongation cycle of fatty acid which are used in the lipid metabolism and in the biotin biosynthesis. This chain is Enoyl-[acyl-carrier-protein] reductase [NADH] FabI (fabI), found in Escherichia coli (strain K12).